A 192-amino-acid chain; its full sequence is dCTP deaminase, dUMP-forming (192 aa).

Residues 101–106, D119, 127–129, Q148, Y162, and Q174 contribute to the dCTP site; these read KSSLGR and TLE. The active-site Proton donor/acceptor is the E129. The interval 162–192 is disordered; the sequence is YGSGADGSRYQGQRGPTASRSHVKFHRTHVE. Over residues 171–181 the composition is skewed to polar residues; the sequence is YQGQRGPTASR. The segment covering 182 to 192 has biased composition (basic residues); it reads SHVKFHRTHVE.

This sequence belongs to the dCTP deaminase family. In terms of assembly, homotrimer.

It carries out the reaction dCTP + 2 H2O = dUMP + NH4(+) + diphosphate. The protein operates within pyrimidine metabolism; dUMP biosynthesis; dUMP from dCTP: step 1/1. Bifunctional enzyme that catalyzes both the deamination of dCTP to dUTP and the hydrolysis of dUTP to dUMP without releasing the toxic dUTP intermediate. The protein is dCTP deaminase, dUMP-forming of Beutenbergia cavernae (strain ATCC BAA-8 / DSM 12333 / CCUG 43141 / JCM 11478 / NBRC 16432 / NCIMB 13614 / HKI 0122).